A 459-amino-acid polypeptide reads, in one-letter code: 23S rRNA (uracil-C(5))-methyltransferase RlmCD (459 aa).

The TRAM domain maps to Pro-6–Glu-64. [4Fe-4S] cluster contacts are provided by Cys-77, Cys-83, Cys-86, and Cys-166. Residues Gln-290, Tyr-319, Glu-340, and Asp-388 each contribute to the S-adenosyl-L-methionine site. The active-site Nucleophile is Cys-415.

Belongs to the class I-like SAM-binding methyltransferase superfamily. RNA M5U methyltransferase family.

The catalysed reaction is uridine(747) in 23S rRNA + S-adenosyl-L-methionine = 5-methyluridine(747) in 23S rRNA + S-adenosyl-L-homocysteine + H(+). The enzyme catalyses uridine(1939) in 23S rRNA + S-adenosyl-L-methionine = 5-methyluridine(1939) in 23S rRNA + S-adenosyl-L-homocysteine + H(+). Its function is as follows. Catalyzes the formation of 5-methyl-uridine at positions 747 (m5U747) and 1939 (m5U1939) in 23S rRNA. The sequence is that of 23S rRNA (uracil-C(5))-methyltransferase RlmCD (rlmCD) from Bacillus subtilis (strain 168).